A 356-amino-acid polypeptide reads, in one-letter code: Cyanuric acid amidohydrolase (356 aa).

The interval 1 to 99 is RU A; it reads MPIAKVHRIA…FLVFERAEGN (99 aa). Substrate is bound by residues R52 and 79 to 80; that span reads SG. The interval 106-243 is RU B; sequence ALAIGRAHTP…HEIVVLGMSE (138 aa). K156 is a catalytic residue. Residues R188 and 226–227 contribute to the substrate site; that span reads SS. Catalysis depends on S226, which acts as the Nucleophile. The interval 249–356 is RU C; sequence LAIAHGVMAD…VAVIAARTMG (108 aa). Position 287 (E287) interacts with Mg(2+). Residues R314 and 333 to 334 contribute to the substrate site; that span reads SG. 5 residues coordinate Mg(2+): G336, Q339, G340, P341, and G344.

Belongs to the cyclic amide hydrolase (CyAH) family. As to quaternary structure, homotetramer.

The catalysed reaction is cyanurate + H2O = 1-carboxybiuret + H(+). It participates in xenobiotic degradation; atrazine degradation; biuret from cyanurate: step 1/1. Its activity is regulated as follows. Inhibited by barbituric acid. Responsible for the hydrolysis of cyanuric acid, an intermediate formed during catabolism of s-triazine based compounds in herbicides such as atrazine and polymers such as melamine. Catalyzes the hydrolytic opening of the s-triazine ring of cyanuric acid (2,4,6-trihydroxy-s-triazine) to yield carbon dioxide and carboxybiuret, which spontaneously decarboxylates to biuret. The sequence is that of Cyanuric acid amidohydrolase from Azorhizobium caulinodans (strain ATCC 43989 / DSM 5975 / JCM 20966 / LMG 6465 / NBRC 14845 / NCIMB 13405 / ORS 571).